The sequence spans 181 residues: Nucleoside triphosphate/diphosphate phosphatase (181 aa).

Arginine 26 acts as the Proton donor in catalysis. Mg(2+) contacts are provided by asparagine 90, aspartate 106, aspartate 108, aspartate 110, aspartate 123, and glutamate 126.

It belongs to the Ntdp family. Mg(2+) is required as a cofactor.

The enzyme catalyses a ribonucleoside 5'-triphosphate + H2O = a ribonucleoside 5'-diphosphate + phosphate + H(+). It carries out the reaction a ribonucleoside 5'-diphosphate + H2O = a ribonucleoside 5'-phosphate + phosphate + H(+). Has nucleoside phosphatase activity towards nucleoside triphosphates and nucleoside diphosphates. The protein is Nucleoside triphosphate/diphosphate phosphatase of Ligilactobacillus salivarius (strain UCC118) (Lactobacillus salivarius).